A 131-amino-acid chain; its full sequence is Peptide methionine sulfoxide reductase MsrB (131 aa).

A MsrB domain is found at 8-130 (LEEWRAMLDP…NSVCLDLKPR (123 aa)). The Zn(2+) site is built by Cys47, Cys50, Cys96, and Cys99. The Nucleophile role is filled by Cys119.

This sequence belongs to the MsrB Met sulfoxide reductase family. Requires Zn(2+) as cofactor.

It catalyses the reaction L-methionyl-[protein] + [thioredoxin]-disulfide + H2O = L-methionyl-(R)-S-oxide-[protein] + [thioredoxin]-dithiol. The polypeptide is Peptide methionine sulfoxide reductase MsrB (Pseudomonas entomophila (strain L48)).